The sequence spans 394 residues: Bifunctional enzyme Fae/Hps (394 aa).

Positions Met1–Phe162 are formaldehyde-activating enzyme. Catalysis depends on His18, which acts as the Proton donor. The substrate site is built by Asp20, Leu49, Lys67, Thr69, and Gln84. A 3-hexulose-6-phosphate synthase region spans residues Val163–Phe394.

In the N-terminal section; belongs to the formaldehyde-activating enzyme family. The protein in the C-terminal section; belongs to the HPS/KGPDC family. HPS subfamily.

The catalysed reaction is 5,6,7,8-tetrahydromethanopterin + formaldehyde = 5,10-methylenetetrahydromethanopterin + H2O. It carries out the reaction D-ribulose 5-phosphate + formaldehyde = D-arabino-hex-3-ulose 6-phosphate. The protein operates within carbohydrate biosynthesis; D-ribose 5-phosphate biosynthesis. Catalyzes the condensation of formaldehyde with tetrahydromethanopterin (H(4)MPT) to 5,10-methylenetetrahydromethanopterin. Functionally, catalyzes the reversible formation of ribulose-5-phosphate and formaldehyde from 3-hexulose-6-phosphate. The chain is Bifunctional enzyme Fae/Hps from Archaeoglobus fulgidus (strain ATCC 49558 / DSM 4304 / JCM 9628 / NBRC 100126 / VC-16).